A 240-amino-acid polypeptide reads, in one-letter code: MSKLELLPAVDVRDGQAVRLVHGESGTETSYGSPLEAALAWQRSGAEWLHLVDLDAAFGTGDNRALIAEVAQAMDIKVELSGGIRDDDTLAAALATGCTRVNLGTAALETPEWVAKVIAEHGDKIAVGLDVRGTTLRGRGWTRDGGDLYETLDRLNKEGCARYVVTDIAKDGTLQGPNLELLKNVCAATDRPVVASGGVSSLDDLRAIAGLVPAGVEGAIVGKALYAKAFTLEEALEATS.

The active-site Proton acceptor is Asp11. The Proton donor role is filled by Asp130.

Belongs to the HisA/HisF family. As to quaternary structure, monomer.

It is found in the cytoplasm. It carries out the reaction 1-(5-phospho-beta-D-ribosyl)-5-[(5-phospho-beta-D-ribosylamino)methylideneamino]imidazole-4-carboxamide = 5-[(5-phospho-1-deoxy-D-ribulos-1-ylimino)methylamino]-1-(5-phospho-beta-D-ribosyl)imidazole-4-carboxamide. The enzyme catalyses N-(5-phospho-beta-D-ribosyl)anthranilate = 1-(2-carboxyphenylamino)-1-deoxy-D-ribulose 5-phosphate. Its pathway is amino-acid biosynthesis; L-histidine biosynthesis; L-histidine from 5-phospho-alpha-D-ribose 1-diphosphate: step 4/9. The protein operates within amino-acid biosynthesis; L-tryptophan biosynthesis; L-tryptophan from chorismate: step 3/5. Functionally, catalyzes the isomerization of the aminoaldose moiety of ProFAR to the aminoketose of PRFAR in the biosynthesis pathway for histidine and the isomerization of the aminoaldose PRA to the aminoketose CdRP in the biosynthsis pathway for tryptophan. The chain is Phosphoribosyl isomerase A (priA) from Streptomyces coelicolor (strain ATCC BAA-471 / A3(2) / M145).